The chain runs to 119 residues: Non-structural protein 3b (119 aa).

The DRBM domain occupies 2–83 (DYVSLLNQFW…ARLICEQLQA (82 aa)).

In terms of assembly, interacts with host RUNX1 isoform b.

The protein resides in the host nucleus. Its subcellular location is the host nucleolus. The protein localises to the host mitochondrion. Induces host cell G0/G1 arrest and apoptosis. This chain is Non-structural protein 3b, found in Tylonycteris pachypus (Lesser bamboo bat).